A 328-amino-acid chain; its full sequence is Cell division protein ZipA (328 aa).

At methionine 1–asparagine 4 the chain is on the periplasmic side. Residues threonine 5 to serine 25 form a helical membrane-spanning segment. The Cytoplasmic segment spans residues asparagine 26–valine 328. The tract at residues serine 44–leucine 82 is disordered. Residues glutamine 57 to lysine 81 show a composition bias toward polar residues.

This sequence belongs to the ZipA family. Interacts with FtsZ via their C-terminal domains.

Its subcellular location is the cell inner membrane. Essential cell division protein that stabilizes the FtsZ protofilaments by cross-linking them and that serves as a cytoplasmic membrane anchor for the Z ring. Also required for the recruitment to the septal ring of downstream cell division proteins. This chain is Cell division protein ZipA, found in Haemophilus influenzae (strain PittGG).